A 461-amino-acid polypeptide reads, in one-letter code: Argininosuccinate lyase (461 aa).

This sequence belongs to the lyase 1 family. Argininosuccinate lyase subfamily.

It localises to the cytoplasm. The enzyme catalyses 2-(N(omega)-L-arginino)succinate = fumarate + L-arginine. The protein operates within amino-acid biosynthesis; L-arginine biosynthesis; L-arginine from L-ornithine and carbamoyl phosphate: step 3/3. The chain is Argininosuccinate lyase from Dehalococcoides mccartyi (strain ATCC BAA-2100 / JCM 16839 / KCTC 5957 / BAV1).